The sequence spans 234 residues: Eosinophil granule major basic protein 2 (234 aa).

The signal sequence occupies residues 1–15 (MKLLLLLALLVGAVS). Residues 16–115 (TRHLNVDTSS…VKFEGSPGCK (100 aa)) constitute a propeptide, acidic. The segment at 26–96 (LQSLQGEESL…SSELDMGPED (71 aa)) is disordered. S69 carries O-linked (Xyl...) (glycosaminoglycan) serine glycosylation. Acidic residues predominate over residues 71–94 (SEDDPEEEEEEKEMESSSELDMGP). Positions 133 to 234 (SVCQRCFRGN…GVRRAFSCSY (102 aa)) constitute a C-type lectin domain. Intrachain disulfides connect C135/C232 and C209/C224.

Nitrated.

The protein resides in the cytoplasmic granule. MBP may play some important roles in the allergic reactions and inflammations, since MBP is capable of releasing histamine from mast cells and damaging the epithelial cells of bronchial tubes. Antiparasitic and antibiotic. The sequence is that of Eosinophil granule major basic protein 2 (MBP2) from Cavia porcellus (Guinea pig).